The primary structure comprises 729 residues: Fibroblast growth factor receptor 2 (729 aa).

The first 21 residues, 1–21 (MFSWSYLMGLVMVATATLSLA), serve as a signal peptide directing secretion. The Extracellular segment spans residues 22–285 (RPSYNIAEDT…ELDSSSEYTE (264 aa)). Residues 29-62 (EDTTLEPEDANSSGDDEDDNDGSEDFTNDNNHMR) form a disordered region. Residues 31 to 55 (TTLEPEDANSSGDDEDDNDGSEDFT) show a composition bias toward acidic residues. The N-linked (GlcNAc...) asparagine glycan is linked to N39. 2 consecutive Ig-like C2-type domains span residues 64-157 (PYWT…YHLD) and 166-268 (PILQ…AWLT). Residues 71–88 (KLEKKLHAVPAANTVKFR) form a heparin-binding region. C89 and C141 form a disulfide bridge. N-linked (GlcNAc...) asparagine glycosylation is found at N138, N151, N175, N207, N228, N241, and N256. The cysteines at positions 188 and 252 are disulfide-linked. The chain crosses the membrane as a helical span at residues 286–306 (IAIYCVGGFLITCMIGTIMVC). The Cytoplasmic portion of the chain corresponds to 307–729 (HMKGRGKKSD…SQHTNGTIKT (423 aa)). Y374 is subject to Phosphotyrosine; by autocatalysis. The 290-residue stretch at 389 to 678 (LTLGKPLGEG…LTQTTNEEYL (290 aa)) folds into the Protein kinase domain. ATP-binding positions include 395–403 (LGEGCFGQV), K425, 473–475 (EYA), and N479. Position 494 is a phosphotyrosine; by autocatalysis (Y494). The active-site Proton acceptor is D534. A phosphotyrosine; by autocatalysis mark is found at Y564, Y565, and Y677. A disordered region spans residues 683-729 (PLEQYSPSYPDTRSSCSSGDDSVFSPDAMPYDPCLPKSQHTNGTIKT). Residues 693–707 (DTRSSCSSGDDSVFS) are compositionally biased toward low complexity. A compositionally biased stretch (polar residues) spans 720–729 (SQHTNGTIKT).

The protein belongs to the protein kinase superfamily. Tyr protein kinase family. Fibroblast growth factor receptor subfamily. Monomer. Homodimer after ligand binding. Post-translationally, autophosphorylated. Binding of FGF family members together with heparan sulfate proteoglycan or heparin promotes receptor dimerization and autophosphorylation on tyrosine residues. Autophosphorylation occurs in trans between the two FGFR molecules present in the dimer. In terms of processing, N-glycosylated in the endoplasmic reticulum. The N-glycan chains undergo further maturation to an Endo H-resistant form in the Golgi apparatus. Ubiquitinated. FGFR2 is rapidly ubiquitinated after autophosphorylation, leading to internalization and degradation. Subject to degradation both in lysosomes and by the proteasome.

The protein localises to the cell membrane. It is found in the golgi apparatus. It localises to the cytoplasmic vesicle. The catalysed reaction is L-tyrosyl-[protein] + ATP = O-phospho-L-tyrosyl-[protein] + ADP + H(+). With respect to regulation, present in an inactive conformation in the absence of bound ligand. Ligand binding leads to dimerization and activation by autophosphorylation on tyrosine residues. In terms of biological role, tyrosine-protein kinase that acts as a cell-surface receptor for fibroblast growth factors and plays an essential role in the regulation of cell proliferation, differentiation, migration and apoptosis, and in the regulation of embryonic development. Required for normal embryonic patterning, limb bud development, lung morphogenesis, osteogenesis and skin development. Plays an essential role in the regulation of osteoblast differentiation, proliferation and apoptosis, and is required for normal skeleton development. Promotes cell proliferation in keratinocytes and immature osteoblasts, but promotes apoptosis in differentiated osteoblasts. Phosphorylates PLCG1, FRS2 and PAK4. Ligand binding leads to the activation of several signaling cascades. Activation of PLCG1 leads to the production of the cellular signaling molecules diacylglycerol and inositol 1,4,5-trisphosphate. Phosphorylation of FRS2 triggers recruitment of GRB2, GAB1, PIK3R1 and SOS1, and mediates activation of RAS, MAPK1/ERK2, MAPK3/ERK1 and the MAP kinase signaling pathway, as well as of the AKT1 signaling pathway. FGFR2 signaling is down-regulated by ubiquitination, internalization and degradation. Mutations that lead to constitutive kinase activation or impair normal FGFR2 maturation, internalization and degradation lead to aberrant signaling. Over-expressed FGFR2 promotes activation of STAT1. The chain is Fibroblast growth factor receptor 2 (FGFR2) from Notophthalmus viridescens (Eastern newt).